The primary structure comprises 105 residues: U2-lycotoxin-Ls1d (105 aa).

Residues 1 to 17 (MIKYVLISALLVVAVYS) form the signal peptide. Residues 18–41 (FTIEDNEDALLEEAEDELDTEEER) constitute a propeptide that is removed on maturation. 4 disulfide bridges follow: cysteine 51/cysteine 67, cysteine 58/cysteine 97, cysteine 60/cysteine 83, and cysteine 69/cysteine 81.

The protein belongs to the neurotoxin 04 (omega-agtx) family. 01 (type I omega-agtx) subfamily. In terms of tissue distribution, expressed by the venom gland.

It localises to the secreted. Functionally, insecticidal to house crickets. It induces an excitatory slow-onset impact that leads to irreversible spastic paralysis. It also modifies human voltage-gated potassium channel Kv1.5/KCNA5. Most likely, it binds to the voltage-sensing domain of the channel, suggesting it does not block the pore but prevents its opening at physiological membrane potentials. The recombinant peptide binds to the channel in an irreversible manner and slows down the hKv1.5 current activation kinetics. It is not toxic to mice, when intracranially injected (at 0.5 ug/g mouse). This chain is U2-lycotoxin-Ls1d, found in Lycosa singoriensis (Wolf spider).